The chain runs to 216 residues: MAPGSWFSPLLIAVVTLGLPQEAAATFPAMPLSNLFANAVLRAQHLHLLAAETYKEFERTYIPEDQRYTNKNSQAAFCYSETIPAPTGKDDAQQKSDMELLRFSLVLIQSWLTPVQYLSKVFTNNLVFGTSDRVFEKLKDLEEGIQALMRELEDRSPRGPQLLRPTYDKFDIHLRNEDALLKNYGLLSCFKKDLHKVETYLKVMKCRRFGESNCTI.

Positions 1–25 (MAPGSWFSPLLIAVVTLGLPQEAAA) are cleaved as a signal peptide. A Zn(2+)-binding site is contributed by His-45. A disulfide bond links Cys-78 and Cys-189. A Zn(2+)-binding site is contributed by Glu-198. Cys-206 and Cys-214 are joined by a disulfide.

The protein belongs to the somatotropin/prolactin family.

It is found in the secreted. In terms of biological role, growth hormone plays an important role in growth control. The polypeptide is Somatotropin (GH) (Gallus gallus (Chicken)).